The sequence spans 414 residues: Gamma-glutamyl phosphate reductase (414 aa).

It belongs to the gamma-glutamyl phosphate reductase family.

Its subcellular location is the cytoplasm. It carries out the reaction L-glutamate 5-semialdehyde + phosphate + NADP(+) = L-glutamyl 5-phosphate + NADPH + H(+). It functions in the pathway amino-acid biosynthesis; L-proline biosynthesis; L-glutamate 5-semialdehyde from L-glutamate: step 2/2. Catalyzes the NADPH-dependent reduction of L-glutamate 5-phosphate into L-glutamate 5-semialdehyde and phosphate. The product spontaneously undergoes cyclization to form 1-pyrroline-5-carboxylate. The protein is Gamma-glutamyl phosphate reductase of Thermoanaerobacter sp. (strain X514).